We begin with the raw amino-acid sequence, 221 residues long: ATP phosphoribosyltransferase (221 aa).

The protein belongs to the ATP phosphoribosyltransferase family. Short subfamily. In terms of assembly, heteromultimer composed of HisG and HisZ subunits.

The protein localises to the cytoplasm. The catalysed reaction is 1-(5-phospho-beta-D-ribosyl)-ATP + diphosphate = 5-phospho-alpha-D-ribose 1-diphosphate + ATP. Its pathway is amino-acid biosynthesis; L-histidine biosynthesis; L-histidine from 5-phospho-alpha-D-ribose 1-diphosphate: step 1/9. Functionally, catalyzes the condensation of ATP and 5-phosphoribose 1-diphosphate to form N'-(5'-phosphoribosyl)-ATP (PR-ATP). Has a crucial role in the pathway because the rate of histidine biosynthesis seems to be controlled primarily by regulation of HisG enzymatic activity. This Anaeromyxobacter sp. (strain K) protein is ATP phosphoribosyltransferase.